A 204-amino-acid polypeptide reads, in one-letter code: Prephenate decarboxylase (204 aa).

Belongs to the prephenate decarboxylase family.

The protein resides in the cytoplasm. It catalyses the reaction prephenate + H(+) = 3-[(4R)-4-hydroxycyclohexa-1,5-dien-1-yl]-2-oxopropanoate + CO2. Its pathway is antibiotic biosynthesis; bacilysin biosynthesis. Part of the bacABCDEF operon responsible for the biosynthesis of the nonribosomally synthesized dipeptide antibiotic bacilysin, composed of L-alanine and L-anticapsin. Bacilysin is an irreversible inactivator of the glutaminase domain of glucosamine synthetase. BacA is an unusual prephenate decarboxylase that avoids the typical aromatization of the cyclohexadienol ring of prephenate. BacA catalyzes the protonation of prephenate (1-carboxy-4-hydroxy-alpha-oxo-2,5-cyclohexadiene-1-propanoic acid) at C6 position, followed by a decarboxylation to produce the endocyclic-delta(4),delta(8)-7R-dihydro-hydroxyphenylpyruvate (en-H2HPP). En-H2HPP is able to undergo a slow nonenzymatic isomerization to produce the exocyclic-delta(3),delta(5)-dihydro-hydroxyphenylpyruvate (ex-H2HPP). BacA isomerizes only the pro-R double bond in prephenate. The sequence is that of Prephenate decarboxylase from Bacillus subtilis (strain 168).